Here is a 353-residue protein sequence, read N- to C-terminus: Outer membrane protein P5 (353 aa).

The signal sequence occupies residues 1 to 21 (MKKTAIALVVAGLAAASVAQA). A run of 8 beta stranded transmembrane segments spans residues 27–37 (TFYAGVKAGQA), 58–69 (SFTYGVFGGYQI), 77–85 (LAVELGYDD), 104–115 (HGTHLSLKGSYE), 120–128 (LDVYGKAGV), 158–167 (GLFAVGAEYA), 172–179 (LAVRLEYQ), and 205–213 (SINAGISYR). The region spanning 227 to 353 (VVSKTFSLNS…RVEIAVNGTK (127 aa)) is the OmpA-like domain. A disulfide bridge links Cys-326 with Cys-338.

It belongs to the outer membrane OOP (TC 1.B.6) superfamily. OmpA family. In terms of assembly, monomer and homodimer.

It is found in the cell outer membrane. Its function is as follows. With TolR probably plays a role in maintaining the position of the peptidoglycan cell wall in the periplasm. Acts as a porin with low permeability that allows slow penetration of small solutes; an internal gate slows down solute passage. In terms of biological role, reconstitution in planar bilayers with lithium dodecyl sulfate-solublized P5 yields narrow pores (58 pS conductance) with a low probability of opening, whereas n-octyl-bD-glucopyranoside-solubilized P5 forms large pores (1.1 nS conductance) with high open probability. The large pore easily converts to the smaller pore at room temperature; at 42 degrees Celsius the smaller pore converts to the larger one. The protein is Outer membrane protein P5 of Haemophilus influenzae (strain ATCC 51907 / DSM 11121 / KW20 / Rd).